The following is a 300-amino-acid chain: MAEKNRLVTVAALQFACTDDVSTNVATAERLVRAAHQKGANIILIQELFEGYYFCQAQKEEFFHRAKPYPGHPTIVRMQNLAKELGVVIPVSFFEEANNAHYNSVAIIDADGTDLGLYRKSHIPDGPGYQEKYYFNPGDTGFKVFQTKYAKIGVAICWDQWFPEAARAMALQGAEVLFYPTAIGSEPQDDGLDSRDHWRRVMQGHAGANVVPLVASNRIGKEIIETEHGNSEITFYGYSFIAGPTGELVAAAGDKEEAVLVAQFDLDKIKSKRHGWGVYRDRRPDLYKVLLTLDGSNPVK.

A CN hydrolase domain is found at 8–266; it reads VTVAALQFAC…EAVLVAQFDL (259 aa). Catalysis depends on Glu47, which acts as the Proton acceptor. Residue Lys120 is the Proton donor of the active site. The Nucleophile role is filled by Cys157.

This sequence belongs to the carbon-nitrogen hydrolase superfamily. Homooctamer.

It catalyses the reaction N-carbamoylputrescine + H2O + 2 H(+) = putrescine + NH4(+) + CO2. The protein operates within amine and polyamine biosynthesis; putrescine biosynthesis via agmatine pathway; putrescine from N-carbamoylputrescine (amidase route): step 1/1. In terms of biological role, involved in polyamine biosynthesis. The sequence is that of N-carbamoylputrescine amidase (CPA) from Solanum lycopersicum (Tomato).